We begin with the raw amino-acid sequence, 152 residues long: Nucleoside diphosphate kinase (152 aa).

Residues K11, F59, R87, T93, R104, and N114 each coordinate ATP. The active-site Pros-phosphohistidine intermediate is the H117.

This sequence belongs to the NDK family. In terms of assembly, homotetramer. Mg(2+) is required as a cofactor.

The protein resides in the cytoplasm. It catalyses the reaction a 2'-deoxyribonucleoside 5'-diphosphate + ATP = a 2'-deoxyribonucleoside 5'-triphosphate + ADP. The catalysed reaction is a ribonucleoside 5'-diphosphate + ATP = a ribonucleoside 5'-triphosphate + ADP. Functionally, major role in the synthesis of nucleoside triphosphates other than ATP. The ATP gamma phosphate is transferred to the NDP beta phosphate via a ping-pong mechanism, using a phosphorylated active-site intermediate. The chain is Nucleoside diphosphate kinase from Prochlorococcus marinus (strain MIT 9312).